Here is a 374-residue protein sequence, read N- to C-terminus: UDP-N-acetylglucosamine--N-acetylmuramyl-(pentapeptide) pyrophosphoryl-undecaprenol N-acetylglucosamine transferase (374 aa).

Residues 13–15 (TGG), N124, R165, S193, and Q294 each bind UDP-N-acetyl-alpha-D-glucosamine.

Belongs to the glycosyltransferase 28 family. MurG subfamily.

It is found in the cell inner membrane. It carries out the reaction di-trans,octa-cis-undecaprenyl diphospho-N-acetyl-alpha-D-muramoyl-L-alanyl-D-glutamyl-meso-2,6-diaminopimeloyl-D-alanyl-D-alanine + UDP-N-acetyl-alpha-D-glucosamine = di-trans,octa-cis-undecaprenyl diphospho-[N-acetyl-alpha-D-glucosaminyl-(1-&gt;4)]-N-acetyl-alpha-D-muramoyl-L-alanyl-D-glutamyl-meso-2,6-diaminopimeloyl-D-alanyl-D-alanine + UDP + H(+). It participates in cell wall biogenesis; peptidoglycan biosynthesis. Functionally, cell wall formation. Catalyzes the transfer of a GlcNAc subunit on undecaprenyl-pyrophosphoryl-MurNAc-pentapeptide (lipid intermediate I) to form undecaprenyl-pyrophosphoryl-MurNAc-(pentapeptide)GlcNAc (lipid intermediate II). The sequence is that of UDP-N-acetylglucosamine--N-acetylmuramyl-(pentapeptide) pyrophosphoryl-undecaprenol N-acetylglucosamine transferase from Rhizobium etli (strain ATCC 51251 / DSM 11541 / JCM 21823 / NBRC 15573 / CFN 42).